Here is a 191-residue protein sequence, read N- to C-terminus: MAKYEIMLMVSGQLNQNQAQAVNDELKAVFGKTEITEEYLGQKTLEYPIKKEVTAHYFNLFLTSDGKSVHEYKRLASIRTDVLRILILNTEKEFGYRASQNAKKVALAKQKQARYNDIMKQVQENGYFQIKGSKRNSRVEKAGAKEVWMLREKFGEDLPEQKIPVLRKVNLTRKPTPNKSSENKQKVEKQA.

A disordered region spans residues 168-191; it reads KVNLTRKPTPNKSSENKQKVEKQA. The span at 181–191 shows a compositional bias: basic and acidic residues; sequence SENKQKVEKQA.

The protein belongs to the bacterial ribosomal protein bS6 family.

Functionally, binds together with bS18 to 16S ribosomal RNA. This chain is Small ribosomal subunit protein bS6, found in Mycoplasmoides gallisepticum (strain R(low / passage 15 / clone 2)) (Mycoplasma gallisepticum).